The sequence spans 921 residues: Leucine--tRNA ligase (921 aa).

Positions 41–52 match the 'HIGH' region motif; it reads PYPSGSGLHVGH. Positions 695-699 match the 'KMSKS' region motif; the sequence is KMSKS. ATP is bound at residue Lys-698.

This sequence belongs to the class-I aminoacyl-tRNA synthetase family.

The protein resides in the cytoplasm. It carries out the reaction tRNA(Leu) + L-leucine + ATP = L-leucyl-tRNA(Leu) + AMP + diphosphate. The polypeptide is Leucine--tRNA ligase (Cytophaga hutchinsonii (strain ATCC 33406 / DSM 1761 / CIP 103989 / NBRC 15051 / NCIMB 9469 / D465)).